Reading from the N-terminus, the 166-residue chain is NADPH-dependent 7-cyano-7-deazaguanine reductase (166 aa).

Residue C57 is the Thioimide intermediate of the active site. Residue D64 is the Proton donor of the active site. Substrate is bound by residues 79 to 81 (VES) and 98 to 99 (HE).

It belongs to the GTP cyclohydrolase I family. QueF type 1 subfamily.

It localises to the cytoplasm. It catalyses the reaction 7-aminomethyl-7-carbaguanine + 2 NADP(+) = 7-cyano-7-deazaguanine + 2 NADPH + 3 H(+). It participates in tRNA modification; tRNA-queuosine biosynthesis. Catalyzes the NADPH-dependent reduction of 7-cyano-7-deazaguanine (preQ0) to 7-aminomethyl-7-deazaguanine (preQ1). This chain is NADPH-dependent 7-cyano-7-deazaguanine reductase, found in Staphylococcus saprophyticus subsp. saprophyticus (strain ATCC 15305 / DSM 20229 / NCIMB 8711 / NCTC 7292 / S-41).